The sequence spans 308 residues: Probable 5-dehydro-4-deoxyglucarate dehydratase (308 aa).

The protein belongs to the DapA family.

The catalysed reaction is 5-dehydro-4-deoxy-D-glucarate + H(+) = 2,5-dioxopentanoate + CO2 + H2O. It functions in the pathway carbohydrate acid metabolism; D-glucarate degradation; 2,5-dioxopentanoate from D-glucarate: step 2/2. The polypeptide is Probable 5-dehydro-4-deoxyglucarate dehydratase (Bacillus licheniformis (strain ATCC 14580 / DSM 13 / JCM 2505 / CCUG 7422 / NBRC 12200 / NCIMB 9375 / NCTC 10341 / NRRL NRS-1264 / Gibson 46)).